Consider the following 139-residue polypeptide: Small ribosomal subunit protein eS12 (139 aa).

The protein belongs to the eukaryotic ribosomal protein eS12 family. In terms of assembly, subunit of the 40S ribosomal complex. Part of the small subunit (SSU) processome, composed of more than 70 proteins and the RNA chaperone small nucleolar RNA (snoRNA) U3.

The protein resides in the nucleus. Its subcellular location is the nucleolus. Functionally, subunit of the 40S ribosomal complex. Part of the small subunit (SSU) processome, first precursor of the small eukaryotic ribosomal subunit. During the assembly of the SSU processome in the nucleolus, many ribosome biogenesis factors, an RNA chaperone and ribosomal proteins associate with the nascent pre-rRNA and work in concert to generate RNA folding, modifications, rearrangements and cleavage as well as targeted degradation of pre-ribosomal RNA by the RNA exosome. In wing imaginal disks, might have a role in translation rate, growth and cell competition, probably through regulation of Xrp1 expression. Might have a role in development and longevity. This chain is Small ribosomal subunit protein eS12, found in Drosophila melanogaster (Fruit fly).